The chain runs to 371 residues: ADP-ribosylarginine hydrolase Tri1 (371 aa).

An N-terminal extension region spans residues 1 to 61 (MIDLRSPNAL…LQSRACTLTP (61 aa)). The ADP-ribosyl hydrolase domain stretch occupies residues 70–362 (GALLGLAIGD…LFDRAPQVDE (293 aa)). Residues T112, D113, D114, D157, and D313 each contribute to the Mg(2+) site.

The protein belongs to the ADP-ribosylglycohydrolase family. The cofactor is Mg(2+).

The enzyme catalyses N(omega)-(ADP-D-ribosyl)-L-arginyl-[protein] + H2O = ADP-D-ribose + L-arginyl-[protein]. Functionally, immunity component of an interbacterial competition system (also called effector-immunity systems). Expression in E.coli neutralizes the toxic effects of non-cognate S.proteamaculans effector protein Tre1 (Tre1-Sp); cannot be co-purified with Tre1-Sp from E.coli, suggesting they do not form a stable complex. Probably acts as an arginine mono-ADP-ribosylhydrolase, mediating the removal of mono-ADP-ribose attached to arginine residues on proteins. Probably de-ADP-ribosylates FtsZ and possibly other proteins; the ability to hydrolyze ADP-ribosyl moieties is not essential for neutralization of its cognate toxin, strongly suggesting its N-terminal extension occludes the active site of cognate toxin Tre1. The protein is ADP-ribosylarginine hydrolase Tri1 of Pseudomonas putida (strain GB-1).